A 102-amino-acid polypeptide reads, in one-letter code: Large ribosomal subunit protein bL21 (102 aa).

Belongs to the bacterial ribosomal protein bL21 family. In terms of assembly, part of the 50S ribosomal subunit. Contacts protein L20.

Functionally, this protein binds to 23S rRNA in the presence of protein L20. This Cutibacterium acnes (strain DSM 16379 / KPA171202) (Propionibacterium acnes) protein is Large ribosomal subunit protein bL21.